A 78-amino-acid chain; its full sequence is U-scoloptoxin(13)-Er1a (78 aa).

The signal sequence occupies residues 1 to 24; the sequence is MFPSWSTTFVLCMGLCSLMNGALA.

It belongs to the scoloptoxin-13 family. In terms of processing, contains 4 disulfide bonds. In terms of tissue distribution, expressed by the venom gland.

The protein localises to the secreted. The sequence is that of U-scoloptoxin(13)-Er1a from Ethmostigmus rubripes (Giant centipede).